Reading from the N-terminus, the 398-residue chain is MAKLTVKDVDLKGKKVLVRVDFNVPLKDGVITNDNRITAALPTIKYIIEQGGRAILFSHLGRVKEEADKEGKSLAPVAADLAAKLGQDVVFPGVTRGSKLEEAINALEDGQVLLVENTRFEDVDGKKESKNDEELGKYWASLGDGIFVNDAFGTAHRAHASNVGISANVEKAVAGFLLENEIAYIQEAVETPERPFVAILGGSKVSDKIGVIENLLEKADKVLIGGGMTYTFYKAQGIEIGNSLVEEDKLDVAKDLLEKSNGKLILPVDSKEANAFAGYTEVRDTEGEAVSEGFLGLDIGPKSIAEFDQALTGAKTVVWNGPMGVFENPDFQAGTIDVMDAIVKQPGVKSIIGGGDSAAAAINLGRADKFSWISTGGGASMELLEGKVLPGLAALTEK.

Residues 21-23 (DFN), arginine 36, 59-62 (HLGR), arginine 119, and arginine 157 contribute to the substrate site. ATP-binding positions include lysine 208, glycine 296, glutamate 327, and 354-357 (GGDS).

Belongs to the phosphoglycerate kinase family. Monomer.

It is found in the cytoplasm. It carries out the reaction (2R)-3-phosphoglycerate + ATP = (2R)-3-phospho-glyceroyl phosphate + ADP. It participates in carbohydrate degradation; glycolysis; pyruvate from D-glyceraldehyde 3-phosphate: step 2/5. The polypeptide is Phosphoglycerate kinase (Streptococcus pyogenes serotype M5 (strain Manfredo)).